A 281-amino-acid polypeptide reads, in one-letter code: Elongation factor Ts (281 aa).

An involved in Mg(2+) ion dislocation from EF-Tu region spans residues 80-83; that stretch reads TDFV.

The protein belongs to the EF-Ts family.

The protein resides in the cytoplasm. Its function is as follows. Associates with the EF-Tu.GDP complex and induces the exchange of GDP to GTP. It remains bound to the aminoacyl-tRNA.EF-Tu.GTP complex up to the GTP hydrolysis stage on the ribosome. The protein is Elongation factor Ts of Vibrio campbellii (strain ATCC BAA-1116).